A 1149-amino-acid chain; its full sequence is Nitric oxide synthase, inducible (1149 aa).

Positions 22–83 (KDINNNVGKA…HKPSPTCSQH (62 aa)) are disordered. Residues 23-27 (DINNN) carry the DINNN-motif; mediates interaction with SPSB1, SPSB2 and SPSB4 motif. Over residues 50-61 (KHQNGSSQSLTG) the composition is skewed to polar residues. Cys109 and Cys114 together coordinate Zn(2+). Ser117 serves as a coordination point for (6R)-L-erythro-5,6,7,8-tetrahydrobiopterin. Cys199 provides a ligand contact to heme b. L-arginine-binding residues include Gln262, Trp371, Tyr372, and Glu376. (6R)-L-erythro-5,6,7,8-tetrahydrobiopterin-binding residues include Arg380, Ile461, Trp462, and Phe475. Tyr490 contacts heme b. Residues 514-534 (FRVLAKATLFASLLMRKMMAS) are calmodulin-binding. One can recognise a Flavodoxin-like domain in the interval 538 to 676 (ATILFATETG…AFCTWAVQTF (139 aa)). FMN-binding residues include Thr544, Glu545, Thr546, Lys548, and Ser549. A Phosphotyrosine modification is found at Tyr574. 7 residues coordinate FMN: Ser590, Thr591, Ser627, Arg632, Cys634, Glu660, and Gln664. The FAD-binding FR-type domain maps to 729-969 (TDVFTMRLKS…VRSVNSFQLP (241 aa)). Arg749 provides a ligand contact to NADP(+). FAD is bound by residues His771, Arg905, Tyr907, Ser908, Thr923, and Ala925. NADP(+) is bound at residue Thr928. FAD is bound by residues Tyr929, Val942, Cys943, and Ser944. Residues Thr983, Arg1016, Ser1045, Arg1046, Lys1052, Tyr1054, Gln1056, and Asp1089 each contribute to the NADP(+) site.

Belongs to the NOS family. Homodimer. Interacts with NHERF1. Interacts with GAPDH; induced by oxidatively-modified low-densitity lipoprotein (LDL(ox)). Interacts with S100A8 and S100A9 to form the iNOS-S100A8/9 transnitrosylase complex. Interacts with SPSB1, SPSB2 and SPSB4. Interacts with ELOC and CUL5 in the presence of SPSB1 or SPSB2 or SPSB4. Forms a complex with ASL, ASS1 and HSP90AA1; the complex regulates cell-autonomous L-arginine synthesis and citrulline recycling while channeling extracellular L-arginine to nitric oxide synthesis pathway. Heme b serves as cofactor. The cofactor is FAD. Requires FMN as cofactor. It depends on (6R)-L-erythro-5,6,7,8-tetrahydrobiopterin as a cofactor. In terms of processing, polyubiquitinated; mediated by SPSB1, SPSB2 and SPSB4, leading to proteasomal degradation. As to expression, expressed in the lung and colon. Not detected in the heart, aorta, liver, kidney, and spleen.

The protein localises to the cytoplasm. It is found in the cytosol. The enzyme catalyses 2 L-arginine + 3 NADPH + 4 O2 + H(+) = 2 L-citrulline + 2 nitric oxide + 3 NADP(+) + 4 H2O. With respect to regulation, regulated by calcium/calmodulin. In terms of biological role, produces nitric oxide (NO) which is a messenger molecule with diverse functions throughout the body. In macrophages, NO mediates tumoricidal and bactericidal actions. Also has nitrosylase activity and mediates cysteine S-nitrosylation of cytoplasmic target proteins such PTGS2/COX2. As component of the iNOS-S100A8/9 transnitrosylase complex involved in the selective inflammatory stimulus-dependent S-nitrosylation of GAPDH implicated in regulation of the GAIT complex activity and probably multiple targets including ANXA5, EZR, MSN and VIM. Involved in inflammation, enhances the synthesis of pro-inflammatory mediators such as IL6 and IL8. The sequence is that of Nitric oxide synthase, inducible (NOS2) from Cavia porcellus (Guinea pig).